Reading from the N-terminus, the 104-residue chain is Turripeptide OL55-like (104 aa).

Post-translationally, contains 8 disulfide bonds. As to expression, expressed by the venom duct.

The protein localises to the secreted. In terms of biological role, acts as a neurotoxin by inhibiting an ion channel. The chain is Turripeptide OL55-like from Iotyrris cingulifera (Sea snail).